The following is a 260-amino-acid chain: Crotonyl-CoA hydratase (260 aa).

Glutamate 114 (nucleophile) is an active-site residue. Glutamate 134 functions as the Proton acceptor in the catalytic mechanism.

It belongs to the enoyl-CoA hydratase/isomerase family. As to quaternary structure, homotetramer.

It is found in the cytoplasm. It carries out the reaction 3-hydroxybutanoyl-CoA = (2E)-butenoyl-CoA + H2O. The enzyme catalyses a short-chain (3S)-3-hydroxyacyl-CoA = a short-chain (2E)-enoyl-CoA + H2O. Its pathway is lipid metabolism; butanoate metabolism. Functionally, involved in syntrophic growth of S.wolfei with butyrate, as part of the butyrate oxidation pathway. Probably catalyzes the hydration of crotonyl-CoA to 3-hydroxybutyryl-CoA. The protein is Crotonyl-CoA hydratase of Syntrophomonas wolfei subsp. wolfei (strain DSM 2245B / Goettingen).